The sequence spans 1362 residues: ATP-dependent RNA helicase dhx29 (1362 aa).

Positions 1–10 (MGGKNKKNRH) are enriched in basic residues. Residues 1–76 (MGGKNKKNRH…FASSSDSGVS (76 aa)) are disordered. A compositionally biased stretch (low complexity) spans 18-27 (GATAAANRPR). Residues 28–41 (AAAEPRPGGEDAAK) are compositionally biased toward basic and acidic residues. The segment covering 66 to 76 (SFASSSDSGVS) has biased composition (low complexity). Residues 89–109 (EAKLEKRIISLINEHKKLNSN) adopt a coiled-coil conformation. Disordered regions lie at residues 182–215 (QRAR…LKGN) and 229–257 (EQGS…DPNE). Positions 231–242 (GSDDDDDDDDVK) are enriched in acidic residues. The segment covering 243–257 (EEEKETTLEKFDPNE) has biased composition (basic and acidic residues). A coiled-coil region spans residues 285–305 (QKEAQERIRGYQQEMKSLEDH). Residues 317–336 (VKSESKQPKPALPPSEDEPL) form a disordered region. A Helicase ATP-binding domain is found at 576–749 (LETLKRHRVI…FTHCPIIRIS (174 aa)). An ATP-binding site is contributed by 589-596 (GETGSGKS). The DEAH box signature appears at 696 to 699 (DEVH). The region spanning 852–1021 (DISPEYRNVE…ELCLHIMKCD (170 aa)) is the Helicase C-terminal domain.

The protein belongs to the DEAD box helicase family. DEAH subfamily. As to quaternary structure, part of the 43S pre-initiation complex (PIC).

It localises to the cytoplasm. It carries out the reaction ATP + H2O = ADP + phosphate + H(+). ATP-binding RNA helicase involved in translation initiation. Part of the 43S pre-initiation complex that is required for efficient initiation on mRNAs of higher eukaryotes with structured 5'-UTRs by promoting efficient NTPase-dependent 48S complex formation. Specifically binds to the 40S ribosome near the mRNA entrance. Does not possess a processive helicase activity. The chain is ATP-dependent RNA helicase dhx29 from Xenopus laevis (African clawed frog).